The sequence spans 488 residues: C2H2-type transcription factor MSN2 (488 aa).

2 C2H2-type zinc fingers span residues 376–399 (FVCDLCNRRFRRQEHLKRHYRSLH) and 405–427 (FECNECGKKFSRSDNLAQHARTH).

The protein resides in the nucleus. The protein localises to the cytoplasm. Functionally, transcription factor that acts as a key downstream transcription factor in the HOG1-MAPK pathway. Plays crucial roles in the regulation of conidiation, virulence and multi-stress responses. Acts as a negative regulator of proteases, lipases, as well as of the red-pigmented oosporein production, and contributes to virulence and growth in response to external pH. Contributes to the ability to infect Rhipicephalus microplus (Acari, Ixodidae) via the cuticle-penetration requiring route involving proteolytic activity at the host cuticle. Does not seem to be involved in subsequent growth and proliferation once the tick cuticle has been breached. This Beauveria bassiana (strain ARSEF 2860) (White muscardine disease fungus) protein is C2H2-type transcription factor MSN2.